The sequence spans 241 residues: DNA repair protein RecO (241 aa).

It belongs to the RecO family.

Its function is as follows. Involved in DNA repair and RecF pathway recombination. In Yersinia enterocolitica serotype O:8 / biotype 1B (strain NCTC 13174 / 8081), this protein is DNA repair protein RecO.